A 336-amino-acid polypeptide reads, in one-letter code: Small ribosomal subunit protein uS2 (336 aa).

It belongs to the universal ribosomal protein uS2 family.

This is Small ribosomal subunit protein uS2 from Beijerinckia indica subsp. indica (strain ATCC 9039 / DSM 1715 / NCIMB 8712).